Consider the following 166-residue polypeptide: Small ribosomal subunit protein uS5 (166 aa).

The region spanning 11 to 74 (LVEKLVAVDR…EAARRNMITV (64 aa)) is the S5 DRBM domain.

The protein belongs to the universal ribosomal protein uS5 family. Part of the 30S ribosomal subunit. Contacts proteins S4 and S8.

With S4 and S12 plays an important role in translational accuracy. In terms of biological role, located at the back of the 30S subunit body where it stabilizes the conformation of the head with respect to the body. The sequence is that of Small ribosomal subunit protein uS5 from Acinetobacter baumannii (strain ATCC 17978 / DSM 105126 / CIP 53.77 / LMG 1025 / NCDC KC755 / 5377).